A 250-amino-acid polypeptide reads, in one-letter code: Peptidyl-tRNA hydrolase, mitochondrial (250 aa).

Residues 1–45 constitute a mitochondrion transit peptide; that stretch reads MRLLSGASASRIPCPLLSLARARARCLPVPASATACRAASSSAAA. Tyr-68 provides a ligand contact to tRNA. Catalysis depends on His-73, which acts as the Proton acceptor. Positions 118, 120, and 166 each coordinate tRNA.

This sequence belongs to the PTH family.

It localises to the mitochondrion. It catalyses the reaction an N-acyl-L-alpha-aminoacyl-tRNA + H2O = an N-acyl-L-amino acid + a tRNA + H(+). Functionally, the natural substrate for this enzyme may be peptidyl-tRNAs which drop off the ribosome during protein synthesis. This Oryza sativa subsp. japonica (Rice) protein is Peptidyl-tRNA hydrolase, mitochondrial.